The following is a 151-amino-acid chain: UPF0178 protein CPS_3584 (151 aa).

The protein belongs to the UPF0178 family.

The chain is UPF0178 protein CPS_3584 from Colwellia psychrerythraea (strain 34H / ATCC BAA-681) (Vibrio psychroerythus).